We begin with the raw amino-acid sequence, 634 residues long: MAEEQDFAQLCKLSTQPSHSHCVNNTYRSTQHSQALLRGLLALRDSGILFDVVLVVEGRHIEAHRILLAASCDYFRGMFAGGLKEMEQEEVLIHGVSYNAMCQILHFIYTSELELSLSNVQETLVAACQLQIPEIIHFCCDFLMSWVDEENILDVYRLAELFDLNRLTQQLDTYILKNFVAFSRTDKYRQLPLEKVYSLLSSNRLEVSCETEVYEGALLYHYSMEQVQADQISLHEPPKLLETVRFPLMEAEVLQRLHDKLGPSPLRDTVASALMYHRNESLQPSLQGPHTELRSDFQCVVGFGGIHSTPSTILSDQAKYLNPLLGEWKHFTASLAPRMSNQGIAVLNNFVYLIGGDNNVQGFRAESRCWRYDPRHNRWFQIQSLQQEHADLCVCVVGKYIYAVAGRDYHNNLSAVERYDPATNSWEYVAPLKKEVYAHAGTTLQGKMYITCGRRGEDYLKETHCYDPGSNTWHTLADGPVRRAWHGMAALLDKLFVIGGSNNDAGYRRDVHQVACYSCTSRQWSSVCPLPAGHGEPGIAVLDNRIYVLGGRSHNRGSRTGYVHIYDMEKDCWEEGPQLNNSISGLAACVLTLPRSLLHEQPRGTPNRSQADADFASEVMSVSDWEEFDNSSED.

A2 carries the post-translational modification N-acetylalanine. The BTB domain maps to 50-117; that stretch reads FDVVLVVEGR…IYTSELELSL (68 aa). 6 Kelch repeats span residues 299–349, 350–399, 400–446, 448–493, 494–544, and 545–593; these read CVVG…VLNN, FVYL…VVGK, YIYA…TLQG, MYIT…ALLD, KLFV…VLDN, and RIYV…VLTL. T463 bears the Phosphothreonine mark. Y466 carries the phosphotyrosine modification. A Phosphothreonine modification is found at T475. Residues 600-634 are disordered; that stretch reads EQPRGTPNRSQADADFASEVMSVSDWEEFDNSSED. T605 carries the phosphothreonine modification. Positions 624-634 are enriched in acidic residues; that stretch reads DWEEFDNSSED.

In terms of assembly, component of the BCR(KLHL22) E3 ubiquitin ligase complex, at least composed of CUL3, KLHL22 and RBX1. Interacts with PLK1. Interacts with DEPDC5 (via DEP domain); the interaction depends on amino acid availability. Interacts with YWHAE; required for the nuclear localization of KLHL22 upon amino acid starvation.

The protein resides in the cytoplasm. Its subcellular location is the cytosol. It localises to the cytoskeleton. It is found in the microtubule organizing center. The protein localises to the centrosome. The protein resides in the spindle. Its subcellular location is the nucleus. It localises to the lysosome. Its pathway is protein modification; protein ubiquitination. Functionally, substrate-specific adapter of a BCR (BTB-CUL3-RBX1) E3 ubiquitin ligase complex required for chromosome alignment and localization of PLK1 at kinetochores. The BCR(KLHL22) ubiquitin ligase complex mediates monoubiquitination of PLK1, leading to PLK1 dissociation from phosphoreceptor proteins and subsequent removal from kinetochores, allowing silencing of the spindle assembly checkpoint (SAC) and chromosome segregation. Monoubiquitination of PLK1 does not lead to PLK1 degradation. The BCR(KLHL22) ubiquitin ligase complex is also responsible for the amino acid-stimulated 'Lys-48' polyubiquitination and proteasomal degradation of DEPDC5. Through the degradation of DEPDC5, releases the GATOR1 complex-mediated inhibition of the TORC1 pathway. It is therefore an amino acid-dependent activator within the amino acid-sensing branch of the TORC1 pathway, indirectly regulating different cellular processes including cell growth and autophagy. The chain is Kelch-like protein 22 from Rattus norvegicus (Rat).